A 436-amino-acid chain; its full sequence is F-box protein SKIP16 (436 aa).

The region spanning 75–111 is the F-box; degenerate domain; the sequence is RESFRMYPWNLVKRVRLCWDNLKQWLTLNFPEAKATL. Residues 295 to 436 enclose the ApaG domain; that stretch reads VSVTNGVQVR…FPLELPDYIF (142 aa).

As to quaternary structure, part of a SCF (ASK-cullin-F-box) protein ligase complex. Interacts with SKP1A/ASK1, SKP1B/ASK2, ASK4, ASK11 and ASK13.

It participates in protein modification; protein ubiquitination. Functionally, component of SCF(ASK-cullin-F-box) E3 ubiquitin ligase complexes, which may mediate the ubiquitination and subsequent proteasomal degradation of target proteins. This Arabidopsis thaliana (Mouse-ear cress) protein is F-box protein SKIP16 (SKIP16).